A 1405-amino-acid chain; its full sequence is DNA-directed RNA polymerase subunit beta' (1405 aa).

Zn(2+) contacts are provided by Cys70, Cys72, Cys85, and Cys88. Positions 460, 462, and 464 each coordinate Mg(2+). Positions 814, 888, 895, and 898 each coordinate Zn(2+).

Belongs to the RNA polymerase beta' chain family. In terms of assembly, the RNAP catalytic core consists of 2 alpha, 1 beta, 1 beta' and 1 omega subunit. When a sigma factor is associated with the core the holoenzyme is formed, which can initiate transcription. Requires Mg(2+) as cofactor. The cofactor is Zn(2+).

The catalysed reaction is RNA(n) + a ribonucleoside 5'-triphosphate = RNA(n+1) + diphosphate. Functionally, DNA-dependent RNA polymerase catalyzes the transcription of DNA into RNA using the four ribonucleoside triphosphates as substrates. The protein is DNA-directed RNA polymerase subunit beta' of Shewanella sp. (strain MR-7).